The sequence spans 143 residues: MLSPKRTKFRKQQRGRMTGVASRGNSIHFGDYALQALEPAWITARQIEAGRRAMTRYIRRGGKIWIRIFPDKPVTMRPAETRMGSGKGSPEYWVAVVKPGRIMYEIAGVTEEVAREAMRLAAYKMPIKTRFLVRNQEEQQQEG.

It belongs to the universal ribosomal protein uL16 family. As to quaternary structure, part of the 50S ribosomal subunit.

Its function is as follows. Binds 23S rRNA and is also seen to make contacts with the A and possibly P site tRNAs. This is Large ribosomal subunit protein uL16 from Thermosynechococcus vestitus (strain NIES-2133 / IAM M-273 / BP-1).